Reading from the N-terminus, the 435-residue chain is Methylenetetrahydrofolate--tRNA-(uracil-5-)-methyltransferase TrmFO (435 aa).

Gly9 to Gly14 is an FAD binding site.

This sequence belongs to the MnmG family. TrmFO subfamily. It depends on FAD as a cofactor.

The protein localises to the cytoplasm. The catalysed reaction is uridine(54) in tRNA + (6R)-5,10-methylene-5,6,7,8-tetrahydrofolate + NADH + H(+) = 5-methyluridine(54) in tRNA + (6S)-5,6,7,8-tetrahydrofolate + NAD(+). The enzyme catalyses uridine(54) in tRNA + (6R)-5,10-methylene-5,6,7,8-tetrahydrofolate + NADPH + H(+) = 5-methyluridine(54) in tRNA + (6S)-5,6,7,8-tetrahydrofolate + NADP(+). In terms of biological role, catalyzes the folate-dependent formation of 5-methyl-uridine at position 54 (M-5-U54) in all tRNAs. This Staphylococcus aureus (strain JH1) protein is Methylenetetrahydrofolate--tRNA-(uracil-5-)-methyltransferase TrmFO.